The sequence spans 660 residues: DNA mismatch repair protein MutL (660 aa).

The disordered stretch occupies residues 408 to 436 (DQTSASASVKHASRSQDENQLSEHPNLDF). The segment covering 425–436 (ENQLSEHPNLDF) has biased composition (polar residues).

It belongs to the DNA mismatch repair MutL/HexB family.

Functionally, this protein is involved in the repair of mismatches in DNA. It is required for dam-dependent methyl-directed DNA mismatch repair. May act as a 'molecular matchmaker', a protein that promotes the formation of a stable complex between two or more DNA-binding proteins in an ATP-dependent manner without itself being part of a final effector complex. This Streptococcus uberis (strain ATCC BAA-854 / 0140J) protein is DNA mismatch repair protein MutL.